Here is a 267-residue protein sequence, read N- to C-terminus: 3-methyl-2-oxobutanoate hydroxymethyltransferase (267 aa).

Mg(2+)-binding residues include Asp45 and Asp84. 3-methyl-2-oxobutanoate-binding positions include 45 to 46 (DS), Asp84, and Lys113. Residue Glu115 participates in Mg(2+) binding. Residue Glu182 is the Proton acceptor of the active site.

It belongs to the PanB family. Homodecamer; pentamer of dimers. It depends on Mg(2+) as a cofactor.

It localises to the cytoplasm. The catalysed reaction is 3-methyl-2-oxobutanoate + (6R)-5,10-methylene-5,6,7,8-tetrahydrofolate + H2O = 2-dehydropantoate + (6S)-5,6,7,8-tetrahydrofolate. It functions in the pathway cofactor biosynthesis; coenzyme A biosynthesis. In terms of biological role, catalyzes the reversible reaction in which hydroxymethyl group from 5,10-methylenetetrahydrofolate is transferred onto alpha-ketoisovalerate to form ketopantoate. In Saccharolobus islandicus (strain Y.N.15.51 / Yellowstone #2) (Sulfolobus islandicus), this protein is 3-methyl-2-oxobutanoate hydroxymethyltransferase.